The primary structure comprises 167 residues: Leptin (167 aa).

The signal sequence occupies residues Met-1–Ala-21. Cys-117 and Cys-167 form a disulfide bridge.

Belongs to the leptin family.

It is found in the secreted. Key player in the regulation of energy balance and body weight control. Once released into the circulation, has central and peripheral effects by binding LEPR, found in many tissues, which results in the activation of several major signaling pathways. In the hypothalamus, acts as an appetite-regulating factor that induces a decrease in food intake and an increase in energy consumption by inducing anorexinogenic factors and suppressing orexigenic neuropeptides, also regulates bone mass and secretion of hypothalamo-pituitary-adrenal hormones. In the periphery, increases basal metabolism, influences reproductive function, regulates pancreatic beta-cell function and insulin secretion, is pro-angiogenic for endothelial cell and affects innate and adaptive immunity. In the arcuate nucleus of the hypothalamus, activates by depolarization POMC neurons inducing FOS and SOCS3 expression to release anorexigenic peptides and inhibits by hyperpolarization NPY neurons inducing SOCS3 with a consequent reduction on release of orexigenic peptides. In addition to its known satiety inducing effect, has a modulatory role in nutrient absorption. In the intestine, reduces glucose absorption by enterocytes by activating PKC and leading to a sequential activation of p38, PI3K and ERK signaling pathways which exerts an inhibitory effect on glucose absorption. Acts as a growth factor on certain tissues, through the activation of different signaling pathways increases expression of genes involved in cell cycle regulation such as CCND1, via JAK2-STAT3 pathway, or VEGFA, via MAPK1/3 and PI3K-AKT1 pathways. May also play an apoptotic role via JAK2-STAT3 pathway and up-regulation of BIRC5 expression. Pro-angiogenic, has mitogenic activity on vascular endothelial cells and plays a role in matrix remodeling by regulating the expression of matrix metalloproteinases (MMPs) and tissue inhibitors of metalloproteinases (TIMPs). In innate immunity, modulates the activity and function of neutrophils by increasing chemotaxis and the secretion of oxygen radicals. Increases phagocytosis by macrophages and enhances secretion of pro-inflammatory mediators. Increases cytotoxic ability of NK cells. Plays a pro-inflammatory role, in synergy with IL1B, by inducing NOS2 which promotes the production of IL6, IL8 and Prostaglandin E2, through a signaling pathway that involves JAK2, PI3K, MAP2K1/MEK1 and MAPK14/p38. In adaptive immunity, promotes the switch of memory T-cells towards T helper-1 cell immune responses. Increases CD4(+)CD25(-) T-cell proliferation and reduces autophagy during TCR (T-cell receptor) stimulation, through MTOR signaling pathway activation and BCL2 up-regulation. The protein is Leptin (Lep) of Rattus norvegicus (Rat).